Reading from the N-terminus, the 414-residue chain is Serine/arginine-rich splicing factor SR45 (414 aa).

Disordered stretches follow at residues 1 to 95 (MAKP…KAVQ) and 175 to 414 (LPPR…PRKT). Composition is skewed to low complexity over residues 10-34 (SPSV…SRSI) and 42-60 (RSLS…GSRS). The Nuclear localization signal 1 signature appears at 62–69 (PRRGKSPA). The residue at position 77 (Ser-77) is a Phosphoserine. The 79-residue stretch at 98–176 (LVLHVDSLSR…KVVKATFTLP (79 aa)) folds into the RRM domain. Residues 176–191 (PPRQKVSSPPKPVSAA) are compositionally biased toward low complexity. Positions 205–220 (DAEKDGGPRRPRETSP) are enriched in basic and acidic residues. Positions 218 to 219 (TS) are required for isoform 1 function in petal development. Residues 228–243 (PRRRSPLPRRGLSPRR) show a composition bias toward basic residues. The short motif at 229-236 (RRRSPLPR) is the Nuclear localization signal 2 element. The residue at position 256 (Ser-256) is a Phosphoserine. 3 consecutive short sequence motifs (nuclear localization signal) follow at residues 284–291 (PRRYRSPP), 318–325 (PRRLRSPP), and 338–345 (IRRPGRSR). Basic residues-rich tracts occupy residues 285–343 (RRYR…RPGR) and 352–363 (RKGRGPAGRRGR). Residues 364–373 (SSSYSSSPSP) show a composition bias toward low complexity. The Nuclear localization signal 6 motif lies at 373–380 (PRRIPRKI). Residues 375 to 394 (RIPRKISRSRSPKRPLRGKR) show a composition bias toward basic residues. The span at 404 to 414 (SPPPPPPPRKT) shows a compositional bias: pro residues.

Belongs to the splicing factor SR family. SR45 subfamily. In terms of assembly, component of the spliceosome. Interacts with AFC2, U2AF35A, U2AF35B, RNU1, SCL33 and SKIP. The interaction with AFC2 depends on phosphorylation status. Interaction with RNU1 defines initial 5' splice sites and interaction with U2AF35B 3' splice sites in the early stage of spliceosome assembly. Post-translationally, phosphorylated by AFC2. The phosphorylation status regulates intranuclear distribution. In terms of tissue distribution, especially present in actively growing regions and dividing cells. Mostly expressed in roots (primary and secondary root meristem), shoot apical meristem (SAM), leaf primordia, pollen and inflorescence, and, to a lower extent, in leaves, vascular tissue, hydathode and fruits.

It localises to the nucleus speckle. Its subcellular location is the nucleus. The protein resides in the nucleoplasm. Its function is as follows. Involved in 5' and 3' splicing site selection of introns, and may bridge the 5' and 3' components of the spliceosome. Isoform 1 is required during flower petal development and isoform 2 is involved in root growth. Negatively regulates glucose and abscisic acid (ABA) signaling during early seedling development. Involved in the RNA-directed DNA methylation pathway. Modulates KIN10 stability in response to sugars, probably through the splicing regulation of 5PTASE13, a protein implicated in the proteasomal degradation of KIN10. The polypeptide is Serine/arginine-rich splicing factor SR45 (Arabidopsis thaliana (Mouse-ear cress)).